A 149-amino-acid chain; its full sequence is Transcriptional regulator MraZ (149 aa).

SpoVT-AbrB domains lie at 9–52 (AYSY…PRAQ) and 82–125 (AQEV…DRAR).

It belongs to the MraZ family. Forms oligomers.

It is found in the cytoplasm. It localises to the nucleoid. This is Transcriptional regulator MraZ from Treponema pallidum subsp. pallidum (strain SS14).